The sequence spans 802 residues: Leucine--tRNA ligase (802 aa).

The 'HIGH' region motif lies at proline 41–histidine 52. The 'KMSKS' region motif lies at lysine 580–serine 584. Residue lysine 583 participates in ATP binding.

This sequence belongs to the class-I aminoacyl-tRNA synthetase family.

It localises to the cytoplasm. The enzyme catalyses tRNA(Leu) + L-leucine + ATP = L-leucyl-tRNA(Leu) + AMP + diphosphate. The chain is Leucine--tRNA ligase from Alkaliphilus oremlandii (strain OhILAs) (Clostridium oremlandii (strain OhILAs)).